The primary structure comprises 531 residues: Bifunctional protein TrpGD (531 aa).

Residues 3–196 (DILLLDNIDS…LAWAQQKLEP (194 aa)) form the Glutamine amidotransferase type-1 domain. An L-glutamine-binding site is contributed by 57–59 (GPG). The active-site Nucleophile; for GATase activity is the Cys-84. L-glutamine is bound by residues Gln-88 and 134 to 135 (SL). Residues His-170 and Glu-172 each act as for GATase activity in the active site. The segment at 202–531 (PILEKLYQAQ…DRVTALAARG (330 aa)) is anthranilate phosphoribosyltransferase.

The protein in the C-terminal section; belongs to the anthranilate phosphoribosyltransferase family. As to quaternary structure, monomer. Heterotetramer consisting of two non-identical subunits: a beta subunit (TrpG) and a large alpha subunit (TrpE).

It carries out the reaction chorismate + L-glutamine = anthranilate + pyruvate + L-glutamate + H(+). The catalysed reaction is N-(5-phospho-beta-D-ribosyl)anthranilate + diphosphate = 5-phospho-alpha-D-ribose 1-diphosphate + anthranilate. It functions in the pathway amino-acid biosynthesis; L-tryptophan biosynthesis; L-tryptophan from chorismate: step 1/5. Its pathway is amino-acid biosynthesis; L-tryptophan biosynthesis; L-tryptophan from chorismate: step 2/5. Cooperatively feedback inhibited by tryptophan. In terms of biological role, part of a heterotetrameric complex that catalyzes the two-step biosynthesis of anthranilate, an intermediate in the biosynthesis of L-tryptophan. In the first step, the glutamine-binding beta subunit (TrpG) of anthranilate synthase (AS) provides the glutamine amidotransferase activity which generates ammonia as a substrate that, along with chorismate, is used in the second step, catalyzed by the large alpha subunit of AS (TrpE) to produce anthranilate. In the absence of TrpG, TrpE can synthesize anthranilate directly from chorismate and high concentrations of ammonia. In addition to synthesizing anthranilate, it also catalyzes the second step of the pathway, the transfer of the phosphoribosyl group of 5-phosphorylribose-1-pyrophosphate (PRPP) to anthranilate. The chain is Bifunctional protein TrpGD (trpGD) from Salmonella typhimurium (strain LT2 / SGSC1412 / ATCC 700720).